Reading from the N-terminus, the 644-residue chain is Macrolide export ATP-binding/permease protein MacB (644 aa).

Residues 4-242 form the ABC transporter domain; the sequence is IECKNINRYF…SNVGRIREKA (239 aa). 40 to 47 contacts ATP; it reads GQSGSGKS. 4 helical membrane-spanning segments follow: residues 270–290, 524–544, 574–594, and 607–627; these read LLTM…VALG, IALI…LVSV, LICV…SLVF, and AMSV…FGFM.

This sequence belongs to the ABC transporter superfamily. Macrolide exporter (TC 3.A.1.122) family. As to quaternary structure, homodimer.

The protein localises to the cell inner membrane. In terms of biological role, non-canonical ABC transporter that contains transmembrane domains (TMD), which form a pore in the inner membrane, and an ATP-binding domain (NBD), which is responsible for energy generation. Confers resistance against macrolides. The polypeptide is Macrolide export ATP-binding/permease protein MacB (Neisseria meningitidis serogroup B (strain ATCC BAA-335 / MC58)).